Reading from the N-terminus, the 201-residue chain is Histone-like protein HC2 (201 aa).

The disordered stretch occupies residues 1-69 (MLGVQKKCST…VAKKATAKKA (69 aa)). Basic residues-rich tracts occupy residues 8–50 (CSTR…KTVA) and 59–69 (PVAKKATAKKA).

The protein belongs to the histone H1/H5 family. HCT subfamily.

Might have a role in establishing the nucleoid structure of elementary bodies. This chain is Histone-like protein HC2 (hctB), found in Chlamydia trachomatis serovar D (strain ATCC VR-885 / DSM 19411 / UW-3/Cx).